The primary structure comprises 648 residues: 60 kDa heat shock protein homolog 1, mitochondrial (648 aa).

The transit peptide at 1-55 (MFRSCVPKAITSSRCFARMYSKDVRFGSGVRAMMIRGVDILADAVAVTMGPKGRS) directs the protein to the mitochondrion.

It belongs to the chaperonin (HSP60) family.

It localises to the mitochondrion matrix. Its function is as follows. Prevents misfolding and promotes the refolding and proper assembly of unfolded polypeptides generated under stress conditions. The sequence is that of 60 kDa heat shock protein homolog 1, mitochondrial (Hsp60B) from Drosophila melanogaster (Fruit fly).